The primary structure comprises 368 residues: Phosphate acyltransferase (368 aa).

The interval Val335–Ala368 is disordered. Residues Pro349–Ala368 show a composition bias toward low complexity.

This sequence belongs to the PlsX family. As to quaternary structure, homodimer. Probably interacts with PlsY.

Its subcellular location is the cytoplasm. It catalyses the reaction a fatty acyl-[ACP] + phosphate = an acyl phosphate + holo-[ACP]. The protein operates within lipid metabolism; phospholipid metabolism. Catalyzes the reversible formation of acyl-phosphate (acyl-PO(4)) from acyl-[acyl-carrier-protein] (acyl-ACP). This enzyme utilizes acyl-ACP as fatty acyl donor, but not acyl-CoA. This Burkholderia multivorans (strain ATCC 17616 / 249) protein is Phosphate acyltransferase.